Consider the following 442-residue polypeptide: Glutamate--methylamine ligase (442 aa).

The region spanning 13–97 (NQVKYILAQF…IACDGHTHGK (85 aa)) is the GS beta-grasp domain. Residues 103 to 442 (TRVVLKKQLE…WEVNSYLEFF (340 aa)) form the GS catalytic domain.

It belongs to the glutamine synthetase family. Type 3 subfamily. Requires Mg(2+) as cofactor.

The catalysed reaction is methylamine + L-glutamate + ATP = N(5)-methyl-L-glutamine + ADP + phosphate + H(+). Its function is as follows. Catalyzes the formation of N(5)-methyl-L-glutamine from glutamate and methylamine. This chain is Glutamate--methylamine ligase, found in Methyloversatilis universalis (strain ATCC BAA-1314 / DSM 25237 / JCM 13912 / CCUG 52030 / FAM5).